The sequence spans 209 residues: Small ribosomal subunit protein uS3 (209 aa).

A KH type-2 domain is found at 38-107 (IRKFIKNKYY…RVVINIEEIK (70 aa)).

The protein belongs to the universal ribosomal protein uS3 family. As to quaternary structure, part of the 30S ribosomal subunit. Forms a tight complex with proteins S10 and S14.

Its function is as follows. Binds the lower part of the 30S subunit head. Binds mRNA in the 70S ribosome, positioning it for translation. The chain is Small ribosomal subunit protein uS3 from Thermotoga sp. (strain RQ2).